The sequence spans 128 residues: Small ribosomal subunit protein uS13 (128 aa).

Residues 97–128 (PVRGQRTRSNARTRKGPRPSRIKTKKKKEQTV) form a disordered region. Residues 101–128 (QRTRSNARTRKGPRPSRIKTKKKKEQTV) show a composition bias toward basic residues.

This sequence belongs to the universal ribosomal protein uS13 family. In terms of assembly, part of the 30S ribosomal subunit. Forms a loose heterodimer with protein S19. Forms two bridges to the 50S subunit in the 70S ribosome.

Located at the top of the head of the 30S subunit, it contacts several helices of the 16S rRNA. In the 70S ribosome it contacts the 23S rRNA (bridge B1a) and protein L5 of the 50S subunit (bridge B1b), connecting the 2 subunits; these bridges are implicated in subunit movement. Contacts the tRNAs in the A and P-sites. This chain is Small ribosomal subunit protein uS13, found in Pseudothermotoga lettingae (strain ATCC BAA-301 / DSM 14385 / NBRC 107922 / TMO) (Thermotoga lettingae).